The primary structure comprises 591 residues: Aspartate--tRNA ligase (591 aa).

Glu-173 contributes to the L-aspartate binding site. The tract at residues 197-200 (QLFK) is aspartate. L-aspartate is bound at residue Arg-219. ATP contacts are provided by residues 219-221 (RDE) and Gln-228. His-446 contributes to the L-aspartate binding site. Glu-482 contributes to the ATP binding site. Arg-489 is an L-aspartate binding site. Residue 534–537 (GLDR) participates in ATP binding.

The protein belongs to the class-II aminoacyl-tRNA synthetase family. Type 1 subfamily. As to quaternary structure, homodimer.

The protein localises to the cytoplasm. The enzyme catalyses tRNA(Asp) + L-aspartate + ATP = L-aspartyl-tRNA(Asp) + AMP + diphosphate. Functionally, catalyzes the attachment of L-aspartate to tRNA(Asp) in a two-step reaction: L-aspartate is first activated by ATP to form Asp-AMP and then transferred to the acceptor end of tRNA(Asp). The sequence is that of Aspartate--tRNA ligase from Limosilactobacillus fermentum (strain NBRC 3956 / LMG 18251) (Lactobacillus fermentum).